Consider the following 439-residue polypeptide: Sex-determination protein fem-3 (439 aa).

A disordered region spans residues 21-45 (RRLKRKANDDDDDDETVRERVDDAE).

In terms of assembly, component of a complex containing fem-1, fem-2 and fem-3. Interacts with fem-1 and fem-2 (via N-terminus). Part of a E3 ubiquitin-protein ligase complex, at least composed of cul-2, elc-1, tra-1, fem-1, fem-2 and fem-3; mediates the ubiquitination and subsequent proteasomal degradation of tra-1. Interacts with tra-1. Interacts with sel-10. Interacts with tra-2.

Required for male development. In XO (male) animals, fem-3 directs male differentiation in all tissues. In XX (hermaphrodite) animals, it specifies the first 80 or so germ cells to be sperm. Negatively regulates male development when bound to tra-2. Together with fem-2 associates with the CBC(fem-1) E3 ubiquitin-protein ligase complex which mediates the ubiquitination and subsequent proteasomal degradation of tra-1. The sequence is that of Sex-determination protein fem-3 from Caenorhabditis remanei (Caenorhabditis vulgaris).